We begin with the raw amino-acid sequence, 247 residues long: MVTNSQEGETLPATSSVTGLPQKRFYRQRAHSNPIADHSFDYPARPEDVDWRSLYPNIGSEQQVEFADIGCGYGGFLVTLGEMFPDKLAIGMEIRVKVSDYVIDRIAALRMKNAETSAYQNIACIRTNAMKYLPNYFQKSQLEKMFFLYPDPHFKRAKHKWRIINQALLSEYAYVLRSGGLVYTMTDVEDLHKWIVSHMTQHPLYERLTDEEANADPITPKLYQSSEEGAKVVRNKGDHFLAIFRRI.

S-adenosyl-L-methionine is bound by residues glycine 70, glutamate 93–isoleucine 94, asparagine 128–alanine 129, and leucine 148. The active site involves aspartate 151. Serine 226 to glutamate 228 contributes to the S-adenosyl-L-methionine binding site.

Belongs to the class I-like SAM-binding methyltransferase superfamily. TrmB family.

The protein resides in the nucleus. It catalyses the reaction guanosine(46) in tRNA + S-adenosyl-L-methionine = N(7)-methylguanosine(46) in tRNA + S-adenosyl-L-homocysteine. It participates in tRNA modification; N(7)-methylguanine-tRNA biosynthesis. Its function is as follows. Catalyzes the formation of N(7)-methylguanine at position 46 (m7G46) in tRNA. The sequence is that of tRNA (guanine-N(7)-)-methyltransferase from Drosophila virilis (Fruit fly).